A 555-amino-acid polypeptide reads, in one-letter code: Membrane protein insertase YidC (555 aa).

Helical transmembrane passes span 7-24 (VLWV…DNWQ), 367-387 (WGWS…PLSA), 437-457 (LPVV…LASV), 476-496 (PFFI…SLNP), and 511-531 (PIAF…YYVV).

This sequence belongs to the OXA1/ALB3/YidC family. Type 1 subfamily. In terms of assembly, interacts with the Sec translocase complex via SecD. Specifically interacts with transmembrane segments of nascent integral membrane proteins during membrane integration.

Its subcellular location is the cell inner membrane. Its function is as follows. Required for the insertion and/or proper folding and/or complex formation of integral membrane proteins into the membrane. Involved in integration of membrane proteins that insert both dependently and independently of the Sec translocase complex, as well as at least some lipoproteins. Aids folding of multispanning membrane proteins. The chain is Membrane protein insertase YidC from Burkholderia lata (strain ATCC 17760 / DSM 23089 / LMG 22485 / NCIMB 9086 / R18194 / 383).